Here is an 85-residue protein sequence, read N- to C-terminus: N.vectensis toxin 1 6 (85 aa).

A signal peptide spans 1–20 (MASFKIVIVCLALLVAVACA). The propeptide occupies 21 to 36 (RRRDMMSDDELDYHYS). 3 disulfide bridges follow: Cys-42/Cys-82, Cys-44/Cys-72, and Cys-65/Cys-83.

It belongs to the sea anemone sodium channel inhibitory toxin family. Type II subfamily. As to expression, expressed in ectodermal glands and in clumps outside of the extodermal layer. Is not expressed in nematocytes. In adult female tissues, shows similar expression levels in mesenteries (gametes-producing tissue), tentacles, pharynx and physa.

Its subcellular location is the secreted. Binds to site 3 of voltage-gated sodium channels and inhibits the inactivation process. Is highly active on DmNav1/TipE (drosophila) and is only extremely weakly active on rat Nav1.4-beta-1/SCN4A-SCN1B, and on human Nav1.5-beta-1/SCN5A-beta-1. This reveals high specificity for arthropod over mammalian channels. In vivo, when released into the medium, this recombinant toxin induces impaired swimming, paralysis and death of the crustacean A.nauplii within several hours. Also causes paralysis of cherry shrimps immediately after injection at very low doses. Its effect on zebrafish (D.rerio) larvae is also rapid, since it induces tail twitching accompanied by impaired swimming after 20 minutes and complete paralysis within 45 minutes. It has also been observed to cause death of zebrafish larvae within 1 hour. In Nematostella vectensis (Starlet sea anemone), this protein is N.vectensis toxin 1 6.